The following is a 482-amino-acid chain: Glucose starvation modulator protein 1 (482 aa).

Residues 20–48 (CVFCHEKHLQCDVGRPCQNCEKRNIGESC) constitute a DNA-binding region (zn(2)-C6 fungal-type). In terms of domain architecture, PAS spans 350–422 (LLEYENMSKM…KLFNEYLAFS (73 aa)).

Belongs to the ERT1/acuK family.

The protein resides in the nucleus. Its function is as follows. Transcription factor which regulates nonfermentable carbon utilization. The sequence is that of Glucose starvation modulator protein 1 (GSM1) from Eremothecium gossypii (strain ATCC 10895 / CBS 109.51 / FGSC 9923 / NRRL Y-1056) (Yeast).